The chain runs to 948 residues: Glycine dehydrogenase (decarboxylating) (948 aa).

An N6-(pyridoxal phosphate)lysine modification is found at Lys696.

The protein belongs to the GcvP family. The glycine cleavage system is composed of four proteins: P, T, L and H. It depends on pyridoxal 5'-phosphate as a cofactor.

The catalysed reaction is N(6)-[(R)-lipoyl]-L-lysyl-[glycine-cleavage complex H protein] + glycine + H(+) = N(6)-[(R)-S(8)-aminomethyldihydrolipoyl]-L-lysyl-[glycine-cleavage complex H protein] + CO2. In terms of biological role, the glycine cleavage system catalyzes the degradation of glycine. The P protein binds the alpha-amino group of glycine through its pyridoxal phosphate cofactor; CO(2) is released and the remaining methylamine moiety is then transferred to the lipoamide cofactor of the H protein. The chain is Glycine dehydrogenase (decarboxylating) from Akkermansia muciniphila (strain ATCC BAA-835 / DSM 22959 / JCM 33894 / BCRC 81048 / CCUG 64013 / CIP 107961 / Muc).